Reading from the N-terminus, the 646-residue chain is Lipoteichoic acid synthase (646 aa).

The Cytoplasmic segment spans residues 1-7 (MKLHKKK). A helical transmembrane segment spans residues 8–28 (LTLFAFFILTVLTVTLKTYFS). Residues 29-43 (YYVDFSLGVKGLVQN) lie on the Extracellular side of the membrane. The helical transmembrane segment at 44–64 (LILLMNPYSLIALVLSIFLFF) threads the bilayer. Residues 65–68 (KGKK) lie on the Cytoplasmic side of the membrane. A helical transmembrane segment spans residues 69-89 (AFWFIFIGGFILTFLLYANVV). The Extracellular segment spans residues 90–119 (YFRFFSDFLTFSTLNQAGNVESMGGAVTAS). A helical membrane pass occupies residues 120 to 140 (FKWYDFVYFIDTIIYLFVLIF). The Cytoplasmic segment spans residues 141 to 153 (KQKWLDKRVFSKK). Residues 154–174 (FVPVVMAASIALFFLNLAFAE) traverse the membrane as a helical segment. Residues 175–646 (SDRPELLTRT…KTGPKGQERK (472 aa)) lie on the Extracellular side of the membrane. Glutamate 255 and threonine 300 together coordinate Mn(2+). Residue threonine 300 is part of the active site. A substrate-binding site is contributed by histidine 416. Aspartate 475 and histidine 476 together coordinate Mn(2+). The interval 579–646 (IYDNKNNEPM…KTGPKGQERK (68 aa)) is disordered. Composition is skewed to basic and acidic residues over residues 580–607 (YDNK…KDLQ) and 625–646 (DFDK…QERK).

It belongs to the LTA synthase family. In terms of processing, proteolytically cleaved.

It localises to the cell membrane. The protein resides in the secreted. It participates in cell wall biogenesis; lipoteichoic acid biosynthesis. Its function is as follows. Catalyzes the polymerization of lipoteichoic acid (LTA) polyglycerol phosphate, a reaction that presumably uses phosphatidylglycerol (PG) as substrate. Is required for staphylococcal growth and cell division process. The chain is Lipoteichoic acid synthase (ltaS) from Staphylococcus saprophyticus subsp. saprophyticus (strain ATCC 15305 / DSM 20229 / NCIMB 8711 / NCTC 7292 / S-41).